The primary structure comprises 459 residues: Exodeoxyribonuclease 7 large subunit (459 aa).

The protein belongs to the XseA family. As to quaternary structure, heterooligomer composed of large and small subunits.

Its subcellular location is the cytoplasm. It catalyses the reaction Exonucleolytic cleavage in either 5'- to 3'- or 3'- to 5'-direction to yield nucleoside 5'-phosphates.. Bidirectionally degrades single-stranded DNA into large acid-insoluble oligonucleotides, which are then degraded further into small acid-soluble oligonucleotides. In Yersinia pseudotuberculosis serotype O:3 (strain YPIII), this protein is Exodeoxyribonuclease 7 large subunit.